The sequence spans 200 residues: Large ribosomal subunit protein bL25 (200 aa).

This sequence belongs to the bacterial ribosomal protein bL25 family. CTC subfamily. In terms of assembly, part of the 50S ribosomal subunit; part of the 5S rRNA/L5/L18/L25 subcomplex. Contacts the 5S rRNA. Binds to the 5S rRNA independently of L5 and L18.

In terms of biological role, this is one of the proteins that binds to the 5S RNA in the ribosome where it forms part of the central protuberance. The polypeptide is Large ribosomal subunit protein bL25 (Pseudomonas fluorescens (strain SBW25)).